The following is a 31-amino-acid chain: Cytochrome b6-f complex subunit 6 (31 aa).

The chain crosses the membrane as a helical span at residues 4-24 (ITSYFGFLLAVLTITSALFIG).

Belongs to the PetL family. In terms of assembly, the 4 large subunits of the cytochrome b6-f complex are cytochrome b6, subunit IV (17 kDa polypeptide, PetD), cytochrome f and the Rieske protein, while the 4 small subunits are PetG, PetL, PetM and PetN. The complex functions as a dimer.

It localises to the plastid. The protein localises to the chloroplast thylakoid membrane. In terms of biological role, component of the cytochrome b6-f complex, which mediates electron transfer between photosystem II (PSII) and photosystem I (PSI), cyclic electron flow around PSI, and state transitions. PetL is important for photoautotrophic growth as well as for electron transfer efficiency and stability of the cytochrome b6-f complex. The polypeptide is Cytochrome b6-f complex subunit 6 (Cucumis sativus (Cucumber)).